A 120-amino-acid polypeptide reads, in one-letter code: Large ribosomal subunit protein uL24 (120 aa).

It belongs to the universal ribosomal protein uL24 family. In terms of assembly, part of the 50S ribosomal subunit.

Functionally, one of two assembly initiator proteins, it binds directly to the 5'-end of the 23S rRNA, where it nucleates assembly of the 50S subunit. Its function is as follows. Located at the polypeptide exit tunnel on the outside of the subunit. The chain is Large ribosomal subunit protein uL24 from Archaeoglobus fulgidus (strain ATCC 49558 / DSM 4304 / JCM 9628 / NBRC 100126 / VC-16).